Consider the following 547-residue polypeptide: RNA polymerase sigma factor sigF, chloroplastic (547 aa).

Residues 1-17 (MEATRNLVSSSPSFQTK) are compositionally biased toward polar residues. 2 disordered regions span residues 1–28 (MEAT…SSPS) and 54–79 (FPAS…DDRT). The transit peptide at 1 to 55 (MEATRNLVSSSPSFQTKTHLKSSYSSPSSVVMLHDQTTTPVVNSRHLNSLSRHFP) directs the protein to the chloroplast. The span at 62 to 79 (EPREESRPLSHALRDDRT) shows a compositional bias: basic and acidic residues. Phosphoserine; by CK2 is present on residues serine 94, serine 95, serine 174, serine 176, serine 177, and serine 180. A disordered region spans residues 163–226 (ANPSDNIKDS…QKTSAKKKYK (64 aa)). Over residues 172-181 (SLSTSSSMSL) the composition is skewed to low complexity. Threonine 249 is modified (phosphothreonine; by CK2). Residues 335-348 (DLLQEGSMGLMKSV) carry the Polymerase core binding motif. A DNA-binding region (H-T-H motif) is located at residues 505–524 (LSEIGEIYGLSKERVRQLES).

This sequence belongs to the sigma-70 factor family. Interacts (via N-terminus) with DG1 (via C-terminus). Phosphorylated to acquire sigma activity; site-specific phosphorylation regulates promoter affinity. Phosphorylation at Ser-174 by chloroplastic CK2 requires prior phosphorylation at Ser-177. Phosphorylation at either Ser-94, Ser-95 or Ser-174 is required for sigma activation. Expressed in seedling, accumulating progressively. Present in leaves but not in roots.

The protein resides in the plastid. It is found in the chloroplast. Its function is as follows. Sigma factors are initiation factors that promote the attachment of plastid-encoded RNA polymerase (PEP) to specific initiation sites and are then released. Regulates transcription in chloroplast in a DG1-dependent manner. Involved in light-dependent chloroplast development. Required during early plant development and primary leaf formation. This is RNA polymerase sigma factor sigF, chloroplastic (SIGF) from Arabidopsis thaliana (Mouse-ear cress).